Here is a 213-residue protein sequence, read N- to C-terminus: Nucleolar protein 12 (213 aa).

Positions 33–96 (GFHKRKVERK…RLVTAKTESV (64 aa)) form a coiled coil. The tract at residues 118 to 213 (ARLLGLTPPE…LTGKARHSGE (96 aa)) is disordered. Basic residues-rich tracts occupy residues 170–182 (AHSRKKVKRKHPR) and 198–213 (KAQRRRLTGKARHSGE).

The protein belongs to the RRP17 family. As to quaternary structure, interacts with KIAA1191.

It localises to the nucleus. It is found in the nucleolus. Its subcellular location is the cytoplasm. Multifunctional RNA binding protein that plays a role in RNA metabolism and DNA maintenance. Participates in the resolution of DNA stress and the maintenance of genome integrity by localizing to sites of DNA insults. Also plays a role in proper nucleolar organization by limiting nucleolar size and regulating nucleolar number. Mechanistically, regulates the nucleolar levels of fibrillarin and nucleolin, two key players in pre-rRNA processing and ribosome assembly. This is Nucleolar protein 12 (NOL12) from Homo sapiens (Human).